The chain runs to 116 residues: Putative anti-sigma factor antagonist BtrV (116 aa).

An STAS domain is found at 1 to 110; the sequence is MKLTMDKIDG…NSREAAAAAF (110 aa). Serine 55 carries the post-translational modification Phosphoserine; by BtrW.

Belongs to the anti-sigma-factor antagonist family. As to quaternary structure, interacts with BtrW. Phosphorylated by BtrW. Dephosphorylated by BtrU.

Possible positive regulator of sigma-B activity. Non-phosphorylated BtrV binds to BtrW, preventing its association with an unknown partner(s) that might be sigma-B. When phosphorylated, releases BtrW, which is then free to complex with and inactivate its partner. Involved in type III secretion system (T3SS). This Bordetella bronchiseptica (strain ATCC BAA-588 / NCTC 13252 / RB50) (Alcaligenes bronchisepticus) protein is Putative anti-sigma factor antagonist BtrV (btrV).